Reading from the N-terminus, the 204-residue chain is Octanoyltransferase (204 aa).

The 176-residue stretch at 27–202 (QGGEEALLLL…RFQPLLNLHL (176 aa)) folds into the BPL/LPL catalytic domain. Substrate-binding positions include 65–72 (RGGDVTYH), 132–134 (SIG), and 145–147 (GFA). Cysteine 163 acts as the Acyl-thioester intermediate in catalysis.

It belongs to the LipB family.

The protein localises to the cytoplasm. It catalyses the reaction octanoyl-[ACP] + L-lysyl-[protein] = N(6)-octanoyl-L-lysyl-[protein] + holo-[ACP] + H(+). The protein operates within protein modification; protein lipoylation via endogenous pathway; protein N(6)-(lipoyl)lysine from octanoyl-[acyl-carrier-protein]: step 1/2. Catalyzes the transfer of endogenously produced octanoic acid from octanoyl-acyl-carrier-protein onto the lipoyl domains of lipoate-dependent enzymes. Lipoyl-ACP can also act as a substrate although octanoyl-ACP is likely to be the physiological substrate. The protein is Octanoyltransferase of Citrifermentans bemidjiense (strain ATCC BAA-1014 / DSM 16622 / JCM 12645 / Bem) (Geobacter bemidjiensis).